Here is a 433-residue protein sequence, read N- to C-terminus: Methylenetetrahydrofolate--tRNA-(uracil-5-)-methyltransferase TrmFO (433 aa).

7–12 (GGGLAG) is a binding site for FAD.

This sequence belongs to the MnmG family. TrmFO subfamily. FAD is required as a cofactor.

Its subcellular location is the cytoplasm. The catalysed reaction is uridine(54) in tRNA + (6R)-5,10-methylene-5,6,7,8-tetrahydrofolate + NADH + H(+) = 5-methyluridine(54) in tRNA + (6S)-5,6,7,8-tetrahydrofolate + NAD(+). The enzyme catalyses uridine(54) in tRNA + (6R)-5,10-methylene-5,6,7,8-tetrahydrofolate + NADPH + H(+) = 5-methyluridine(54) in tRNA + (6S)-5,6,7,8-tetrahydrofolate + NADP(+). In terms of biological role, catalyzes the folate-dependent formation of 5-methyl-uridine at position 54 (M-5-U54) in all tRNAs. This Natranaerobius thermophilus (strain ATCC BAA-1301 / DSM 18059 / JW/NM-WN-LF) protein is Methylenetetrahydrofolate--tRNA-(uracil-5-)-methyltransferase TrmFO.